A 486-amino-acid chain; its full sequence is Serine/threonine-protein kinase 32C (486 aa).

A disordered region spans residues 1–56; that stretch reads MRSGAERRGSSAAASPGSPPPGRARPAGSDAPSALPPPAAGQPRARDSGDVRSQPR. Phosphoserine is present on residues Ser10, Ser15, and Ser18. Residues 24–33 are compositionally biased toward low complexity; that stretch reads ARPAGSDAPS. The Protein kinase domain maps to 93 to 353; it reads FQILRAIGKG…LQDVQAAPAL (261 aa). ATP-binding positions include 99-107 and Lys122; that span reads IGKGSFGKV. The Proton acceptor role is filled by Asp216. The segment covering 396-405 has biased composition (basic residues); the sequence is HKKKKRLAKN. Disordered regions lie at residues 396–419 and 444–486; these read HKKKKRLAKNKSRDNSRDSSQSEN and SQDL…AGSG.

Belongs to the protein kinase superfamily. Ser/Thr protein kinase family. Mg(2+) serves as cofactor.

The enzyme catalyses L-seryl-[protein] + ATP = O-phospho-L-seryl-[protein] + ADP + H(+). It carries out the reaction L-threonyl-[protein] + ATP = O-phospho-L-threonyl-[protein] + ADP + H(+). This is Serine/threonine-protein kinase 32C from Homo sapiens (Human).